The sequence spans 133 residues: Sec-independent protein translocase protein TatB (133 aa).

Residues 1-21 form a helical membrane-spanning segment; the sequence is MFDIGFWELVLIAIVALVVLG. The interval 67–133 is disordered; it reads EQMGMQNLSP…ASQPAEKKAE (67 aa). Residues 70 to 84 show a composition bias toward polar residues; the sequence is GMQNLSPELQKSVES. Over residues 97–116 the composition is skewed to low complexity; sequence AATPSSEASSTSSNPSSATE.

Belongs to the TatB family. In terms of assembly, the Tat system comprises two distinct complexes: a TatABC complex, containing multiple copies of TatA, TatB and TatC subunits, and a separate TatA complex, containing only TatA subunits. Substrates initially bind to the TatABC complex, which probably triggers association of the separate TatA complex to form the active translocon.

Its subcellular location is the cell inner membrane. In terms of biological role, part of the twin-arginine translocation (Tat) system that transports large folded proteins containing a characteristic twin-arginine motif in their signal peptide across membranes. Together with TatC, TatB is part of a receptor directly interacting with Tat signal peptides. TatB may form an oligomeric binding site that transiently accommodates folded Tat precursor proteins before their translocation. This chain is Sec-independent protein translocase protein TatB, found in Vibrio cholerae serotype O1 (strain ATCC 39315 / El Tor Inaba N16961).